A 549-amino-acid polypeptide reads, in one-letter code: Teichoic acids export ATP-binding protein TagH (549 aa).

An ABC transporter domain is found at 22-243; the sequence is DKLKDLFFRS…YDEFLKKYNQ (222 aa). 57-64 contacts ATP; that stretch reads GLNGSGKS. The unknown stretch occupies residues 244 to 549; sequence MSVEERKDLR…EIQSISIVKK (306 aa). An SH3b domain is found at 346 to 415; sequence AAKYIVNSNG…ISTKFIEPFK (70 aa).

The protein belongs to the ABC transporter superfamily. Teichoic acids exporter (TC 3.A.1.104.1) family. The complex is composed of two ATP-binding proteins (TagH) and two transmembrane proteins (TagG).

The protein resides in the cell membrane. It catalyses the reaction ATP + H2O + teichoic acidSide 1 = ADP + phosphate + teichoic acidSide 2.. Its function is as follows. Part of the ABC transporter complex TagGH involved in teichoic acids export. Responsible for energy coupling to the transport system. The protein is Teichoic acids export ATP-binding protein TagH of Bacillus anthracis.